We begin with the raw amino-acid sequence, 389 residues long: P2X purinoceptor 6 (389 aa).

Residues 1–45 are Cytoplasmic-facing; it reads MQLQPAGTGNMASAAAAALVSWGFLDYKTEKYVLTRNCRVGVSQR. The helical transmembrane segment at 46-66 threads the bilayer; the sequence is LLQLAVVVYVIGWALLAKKGY. Topologically, residues 67-335 are extracellular; the sequence is QERDLAPQTS…LVTGQAGKFA (269 aa). 3 disulfides stabilise this stretch: Cys-129–Cys-179, Cys-140–Cys-163, and Cys-146–Cys-173. Asn-167, Asn-197, and Asn-212 each carry an N-linked (GlcNAc...) asparagine glycan. Disulfide bonds link Cys-230/Cys-240 and Cys-274/Cys-283. The chain crosses the membrane as a helical span at residues 336–356; that stretch reads LIPTAITVGTGAAWLGMVTFL. The Cytoplasmic segment spans residues 357 to 389; it reads CDLLLLYVDREAGFYWRTKYEEARAPKTTTNSS.

The protein belongs to the P2X receptor family. As to quaternary structure, unlike most P2RXs, P2RX6 does not seem to form homotrimers. P2RX6 are likely to form as obligate heteromers with other P2RXs subunits. Forms heterotrimer with P2RX2 with a variable subunit stoichiometry determined by subunit expression levels. Forms heterotrimer with P2RX4; functional differences between homomeric P2RX4 and P2RX4/6 heterotrimer are minor. Forms a P2RX2/P2RX4/P2RX6 heterotrimer. Interacts with SF3A1; resulting in a reduction of the splicing activity. Post-translationally, N-glycosylated. N-linked glycosylation can affect trafficking to the membrane and function. As to expression, predominantly expressed in skeletal muscle. Also expressed in lung.

Its subcellular location is the cell membrane. The protein localises to the endoplasmic reticulum. It localises to the nucleus. It is found in the nucleus inner membrane. The catalysed reaction is Ca(2+)(in) = Ca(2+)(out). Acts as a modulatory subunit rather than a functional channel. Unlike other P2XRs members, P2RX6 does not seem to form functional homotrimers. P2RX6 requires the presence of P2RX4 or P2RX2 to form functional heterotrimeric receptors at the plasma membrane. P2RX6 can be translocated to the nucleus, where it interacts with the splicing factor (SF3A1), to reduce the incidence of mRNA splicing. May function as a nuclear regulator of post-transcriptional modifications in neurons. In Mus musculus (Mouse), this protein is P2X purinoceptor 6 (P2rx6).